A 455-amino-acid chain; its full sequence is Retinoic acid receptor beta (455 aa).

Residues 1–87 (MTTSSRTCPV…PLPPPRVYKP (87 aa)) form a modulating region. Residues 44–78 (LQSHPPTSGCSTPSPATVETQSTSSEELVPSPPSP) are disordered. Positions 47–66 (HPPTSGCSTPSPATVETQST) are enriched in polar residues. 2 consecutive NR C4-type zinc fingers follow at residues 88 to 108 (CFVCQDKSSGYHYGVSACEGC) and 124 to 148 (CHRDKNCVINKVTRNRCQYCRLQKC). The segment at residues 88-153 (CFVCQDKSSG…RLQKCFEVGM (66 aa)) is a DNA-binding region (nuclear receptor). The hinge stretch occupies residues 154–182 (SKESVRNDRNKKKKEPTKQESTENYEMTA). Residues 183–417 (ELDDLTEKIR…PLIQEMLENS (235 aa)) form the NR LBD domain. Residues 416-455 (NSEGHEPLTPTSNGNTAEHSPSISPSSVDNSSVSQSPMVQ) are disordered. Residues 424 to 434 (TPTSNGNTAEH) are compositionally biased toward polar residues. The segment covering 435-455 (SPSISPSSVDNSSVSQSPMVQ) has biased composition (low complexity).

It belongs to the nuclear hormone receptor family. NR1 subfamily. Heterodimer; with a RXR molecule. Binds DNA preferentially as a RAR/RXR heterodimer.

Its subcellular location is the nucleus. Functionally, receptor for retinoic acid. Retinoic acid receptors bind as heterodimers to their target response elements in response to their ligands, all-trans or 9-cis retinoic acid, and regulate gene expression in various biological processes. The RAR/RXR heterodimers bind to the retinoic acid response elements (RARE) composed of tandem 5'-AGGTCA-3' sites known as DR1-DR5. Required for limb and craniofacial development. The chain is Retinoic acid receptor beta (RARB) from Gallus gallus (Chicken).